Reading from the N-terminus, the 65-residue chain is Large ribosomal subunit protein bL35 (65 aa).

Belongs to the bacterial ribosomal protein bL35 family.

The sequence is that of Large ribosomal subunit protein bL35 from Magnetococcus marinus (strain ATCC BAA-1437 / JCM 17883 / MC-1).